Reading from the N-terminus, the 582-residue chain is ATP-dependent lipid A-core flippase (582 aa).

5 consecutive transmembrane segments (helical) span residues 16–36, 64–84, 153–173, 253–273, and 275–295; these read LWPT…ALIL, LMWM…TSYI, IIGL…ILIV, PIIQ…ASFP, and VMDS…IALM. In terms of domain architecture, ABC transmembrane type-1 spans 28–310; that stretch reads IVAGVALILN…LTNVNAQFQR (283 aa). The ABC transporter domain maps to 342–578; sequence VEFRNVTFTY…RGVYAQLHKM (237 aa). Position 376–383 (376–383) interacts with ATP; the sequence is GRSGSGKS.

Belongs to the ABC transporter superfamily. Lipid exporter (TC 3.A.1.106) family. Homodimer.

Its subcellular location is the cell inner membrane. It carries out the reaction ATP + H2O + lipid A-core oligosaccharideSide 1 = ADP + phosphate + lipid A-core oligosaccharideSide 2.. In terms of biological role, involved in lipopolysaccharide (LPS) biosynthesis. Translocates lipid A-core from the inner to the outer leaflet of the inner membrane. Transmembrane domains (TMD) form a pore in the inner membrane and the ATP-binding domain (NBD) is responsible for energy generation. The protein is ATP-dependent lipid A-core flippase of Escherichia coli O6:K15:H31 (strain 536 / UPEC).